The following is an 87-amino-acid chain: Pyocin-S2 immunity protein (87 aa).

The protein belongs to the colicins ColE2/ColE8/ColE9 and pyocins S1/S2 family.

The protein is Pyocin-S2 immunity protein (imm2) of Pseudomonas aeruginosa (strain ATCC 15692 / DSM 22644 / CIP 104116 / JCM 14847 / LMG 12228 / 1C / PRS 101 / PAO1).